A 417-amino-acid chain; its full sequence is UPF0761 membrane protein CV_0810 (417 aa).

Transmembrane regions (helical) follow at residues 52-72 (LLAL…FPVF), 79-99 (FKIM…ITVY), 110-130 (LTAA…STIE), 150-170 (MVYW…LLSW), 185-205 (LLAS…VLAL), 214-234 (FVPF…LELT), and 258-278 (IPIF…GAVF).

Belongs to the UPF0761 family.

Its subcellular location is the cell inner membrane. The sequence is that of UPF0761 membrane protein CV_0810 from Chromobacterium violaceum (strain ATCC 12472 / DSM 30191 / JCM 1249 / CCUG 213 / NBRC 12614 / NCIMB 9131 / NCTC 9757 / MK).